The chain runs to 383 residues: Histidine decarboxylase (383 aa).

Residue His120 participates in substrate binding. The residue at position 233 (Lys233) is an N6-(pyridoxal phosphate)lysine.

Belongs to the group II decarboxylase family. Homotetramer. The cofactor is pyridoxal 5'-phosphate.

The catalysed reaction is L-histidine + H(+) = histamine + CO2. The protein is Histidine decarboxylase of Acinetobacter baumannii (strain ATCC 17978 / DSM 105126 / CIP 53.77 / LMG 1025 / NCDC KC755 / 5377).